Reading from the N-terminus, the 188-residue chain is Elongation factor P (188 aa).

It belongs to the elongation factor P family.

It is found in the cytoplasm. It participates in protein biosynthesis; polypeptide chain elongation. Functionally, involved in peptide bond synthesis. Stimulates efficient translation and peptide-bond synthesis on native or reconstituted 70S ribosomes in vitro. Probably functions indirectly by altering the affinity of the ribosome for aminoacyl-tRNA, thus increasing their reactivity as acceptors for peptidyl transferase. The chain is Elongation factor P from Ureaplasma urealyticum serovar 10 (strain ATCC 33699 / Western).